We begin with the raw amino-acid sequence, 598 residues long: Arginine--tRNA ligase (598 aa).

The short motif at 139-149 (ANPTGPMHVGH) is the 'HIGH' region element.

It belongs to the class-I aminoacyl-tRNA synthetase family. As to quaternary structure, monomer.

The protein localises to the cytoplasm. It carries out the reaction tRNA(Arg) + L-arginine + ATP = L-arginyl-tRNA(Arg) + AMP + diphosphate. In Bradyrhizobium sp. (strain ORS 278), this protein is Arginine--tRNA ligase.